The sequence spans 73 residues: MAFLKKSLFLVLFLGLVSLSICDEEKRQDEDDDDDDDEEKRGVFDIIKGAGKQLIAHAMGKIAEKVGLNKDGN.

A signal peptide spans 1-22 (MAFLKKSLFLVLFLGLVSLSIC). The propeptide occupies 23–39 (DEEKRQDEDDDDDDDEE).

As to expression, expressed by the skin glands.

Its subcellular location is the secreted. Functionally, has antibacterial activity against Gram-negative bacteria E.coli ATCC 25922 (MIC=60 uM) and S.choleraesuis ATCC 14028 (MIC=240 uM) and against Gram-positive bacterium S.aureus ATCC 29313 (MIC=240 uM). Shows no hemolytic activity and no cytotoxicity. The polypeptide is Ocellatin-PT7 (Leptodactylus pustulatus (Ceara white-lipped frog)).